We begin with the raw amino-acid sequence, 115 residues long: Large ribosomal subunit protein bL20c (115 aa).

The protein belongs to the bacterial ribosomal protein bL20 family.

It is found in the plastid. The protein localises to the chloroplast. Its function is as follows. Binds directly to 23S ribosomal RNA and is necessary for the in vitro assembly process of the 50S ribosomal subunit. It is not involved in the protein synthesizing functions of that subunit. The chain is Large ribosomal subunit protein bL20c from Emiliania huxleyi (Coccolithophore).